Consider the following 174-residue polypeptide: Balbiani ring protein 1 (174 aa).

Residues 28–174 form a disordered region; the sequence is KCRCTSAGKP…RPEGCGSAMR (147 aa). 8 tandem repeats follow at residues 42–52, 53–63, 64–74, 75–85, 124–134, 135–145, 146–156, and 157–167. 4 X 11 AA tandem repeats regions lie at residues 42–85 and 124–167; these read EPSK…PRPE. Basic and acidic residues-rich tracts occupy residues 49–100 and 121–159; these read PRPE…EKCA and RKSE…EKPS.

In terms of tissue distribution, salivary gland.

The protein localises to the secreted. Its function is as follows. Used by the larvae to construct a supramolecular structure, the larval tube. The polypeptide is Balbiani ring protein 1 (BR1) (Chironomus tentans (Midge)).